A 346-amino-acid polypeptide reads, in one-letter code: D-alanine--D-alanine ligase (346 aa).

Residues 133 to 324 (KLYAQSVGVK…IVDNLAKNIE (192 aa)) enclose the ATP-grasp domain. 159-211 (LSFPCILKPARLGSSIGISIVKDESELKYAKDVAFEFDEDVVVEQFVSNIKEY) serves as a coordination point for ATP. Aspartate 284, glutamate 296, and asparagine 298 together coordinate Mg(2+).

The protein belongs to the D-alanine--D-alanine ligase family. It depends on Mg(2+) as a cofactor. The cofactor is Mn(2+).

It localises to the cytoplasm. It catalyses the reaction 2 D-alanine + ATP = D-alanyl-D-alanine + ADP + phosphate + H(+). It participates in cell wall biogenesis; peptidoglycan biosynthesis. Functionally, cell wall formation. The sequence is that of D-alanine--D-alanine ligase from Campylobacter lari (strain RM2100 / D67 / ATCC BAA-1060).